A 592-amino-acid polypeptide reads, in one-letter code: Aspartate--tRNA(Asp/Asn) ligase (592 aa).

Glu-176 provides a ligand contact to L-aspartate. The aspartate stretch occupies residues 200 to 203 (QIFK). Arg-222 is a binding site for L-aspartate. ATP-binding positions include 222–224 (RDE) and Gln-231. His-450 provides a ligand contact to L-aspartate. Residue Glu-484 coordinates ATP. Arg-491 provides a ligand contact to L-aspartate. 536 to 539 (GLDR) contributes to the ATP binding site.

The protein belongs to the class-II aminoacyl-tRNA synthetase family. Type 1 subfamily. In terms of assembly, homodimer.

The protein localises to the cytoplasm. The enzyme catalyses tRNA(Asx) + L-aspartate + ATP = L-aspartyl-tRNA(Asx) + AMP + diphosphate. Functionally, aspartyl-tRNA synthetase with relaxed tRNA specificity since it is able to aspartylate not only its cognate tRNA(Asp) but also tRNA(Asn). Reaction proceeds in two steps: L-aspartate is first activated by ATP to form Asp-AMP and then transferred to the acceptor end of tRNA(Asp/Asn). The protein is Aspartate--tRNA(Asp/Asn) ligase of Anoxybacillus flavithermus (strain DSM 21510 / WK1).